Reading from the N-terminus, the 348-residue chain is Calcium-gated potassium channel TvoK (348 aa).

Transmembrane regions (helical) follow at residues Leu-19–Leu-39, Tyr-52–Val-72, and Val-80–Ile-100. Residues Lys-120–Ser-246 form the RCK N-terminal domain. Residues Asp-266–Gly-348 form the RCK C-terminal domain.

Heterooctamer composed of four full-length subunits and four soluble RCK domains.

The protein localises to the cell membrane. Its function is as follows. Calcium-gated potassium channel. Can also be activated by Mg(2+), Mn(2+) and Ni(2+). The protein is Calcium-gated potassium channel TvoK of Thermoplasma volcanium (strain ATCC 51530 / DSM 4299 / JCM 9571 / NBRC 15438 / GSS1).